The chain runs to 332 residues: Aspartate carbamoyltransferase catalytic subunit (332 aa).

Positions 54 and 55 each coordinate carbamoyl phosphate. Position 82 (Lys-82) interacts with L-aspartate. Carbamoyl phosphate contacts are provided by Arg-104, His-134, and Gln-137. The L-aspartate site is built by Arg-175 and Arg-230. Residues Gly-271 and Pro-272 each contribute to the carbamoyl phosphate site. The interval 312 to 332 (GGPDGDSTTSPGSGPEGGTTP) is disordered.

The protein belongs to the aspartate/ornithine carbamoyltransferase superfamily. ATCase family. As to quaternary structure, heterododecamer (2C3:3R2) of six catalytic PyrB chains organized as two trimers (C3), and six regulatory PyrI chains organized as three dimers (R2).

It catalyses the reaction carbamoyl phosphate + L-aspartate = N-carbamoyl-L-aspartate + phosphate + H(+). It participates in pyrimidine metabolism; UMP biosynthesis via de novo pathway; (S)-dihydroorotate from bicarbonate: step 2/3. Its function is as follows. Catalyzes the condensation of carbamoyl phosphate and aspartate to form carbamoyl aspartate and inorganic phosphate, the committed step in the de novo pyrimidine nucleotide biosynthesis pathway. In Beutenbergia cavernae (strain ATCC BAA-8 / DSM 12333 / CCUG 43141 / JCM 11478 / NBRC 16432 / NCIMB 13614 / HKI 0122), this protein is Aspartate carbamoyltransferase catalytic subunit.